Consider the following 277-residue polypeptide: Large ribosomal subunit protein uL2 (277 aa).

The interval 223-277 (VAMNPVDHPHGGGEGRTSTGRHPVTPWGKRTLGKKTRKRKASDKYIIRSRRARKR) is disordered. Positions 253–277 (TLGKKTRKRKASDKYIIRSRRARKR) are enriched in basic residues.

This sequence belongs to the universal ribosomal protein uL2 family. In terms of assembly, part of the 50S ribosomal subunit. Forms a bridge to the 30S subunit in the 70S ribosome.

Functionally, one of the primary rRNA binding proteins. Required for association of the 30S and 50S subunits to form the 70S ribosome, for tRNA binding and peptide bond formation. It has been suggested to have peptidyltransferase activity; this is somewhat controversial. Makes several contacts with the 16S rRNA in the 70S ribosome. This Halothermothrix orenii (strain H 168 / OCM 544 / DSM 9562) protein is Large ribosomal subunit protein uL2.